Consider the following 27-residue polypeptide: uncharacterized protein (27 aa).

It localises to the plastid. The protein resides in the cyanelle. This is an uncharacterized protein from Cyanophora paradoxa.